Here is an 854-residue protein sequence, read N- to C-terminus: Protein mono-ADP-ribosyltransferase PARP9 (854 aa).

2 consecutive Macro domains span residues 107 to 296 (LQVF…EFIL) and 306 to 487 (TPSF…AKRS). Residues 628 to 850 (IQQQKTQDEM…QHPWRGFASG (223 aa)) form the PARP catalytic domain.

Belongs to the ARTD/PARP family. As to quaternary structure, forms a stable complex with E3 ligase DTX3L; the interaction is required for PARP9 mediated ADP-ribosylation of ubiquitin. Interacts (via PARP catalytic domain) with DTX3L (via N-terminus). Forms a complex with STAT1 and DTX3L independently of IFNB1 or IFNG-mediated STAT1 'Tyr-701' phosphorylation. Forms a complex with STAT1, DTX3L and histone H2B H2BC9/H2BJ; the interaction is likely to induce H2BC9/H2BJ ubiquitination. Interacts (via N-terminus) with STAT1. Interacts with PARP14 in IFNG-stimulated macrophages; the interaction prevents PARP14-mediated STAT1 and STAT6 ADP-riboslylation. Interacts with PARP1 (when poly-ADP-ribosylated). ADP-ribosylated by PARP14. In terms of tissue distribution, expressed in lymphocyte-rich tissues, spleen, lymph nodes, peripheral blood lymphocytes and colonic mucosa. Expressed in macrophages. Also expressed in nonhematopoietic tissues such as heart and skeletal muscle. Isoform 2 is the predominant form. Most abundantly expressed in lymphomas with a brisk host inflammatory response. In diffuse large B-cell lymphomas tumors, expressed specifically by malignant B-cells.

The protein localises to the cytoplasm. The protein resides in the cytosol. It is found in the nucleus. The catalysed reaction is [protein]-C-terminal glycine + NAD(+) = [protein]-C-terminal O-(ADP-D-ribosyl)-glycine + nicotinamide. With respect to regulation, binding to poly(ADP-ribose) does not affect its activity. Its function is as follows. ADP-ribosyltransferase which, in association with E3 ligase DTX3L, plays a role in DNA damage repair and in immune responses including interferon-mediated antiviral defenses. Within the complex, enhances DTX3L E3 ligase activity which is further enhanced by PARP9 binding to poly(ADP-ribose). In association with DTX3L and in presence of E1 and E2 enzymes, mediates NAD(+)-dependent mono-ADP-ribosylation of ubiquitin which prevents ubiquitin conjugation to substrates such as histones. During DNA repair, PARP1 recruits PARP9/BAL1-DTX3L complex to DNA damage sites via PARP9 binding to ribosylated PARP1. Subsequent PARP1-dependent PARP9/BAL1-DTX3L-mediated ubiquitination promotes the rapid and specific recruitment of 53BP1/TP53BP1, UIMC1/RAP80, and BRCA1 to DNA damage sites. In response to DNA damage, PARP9-DTX3L complex is required for efficient non-homologous end joining (NHEJ); the complex function is negatively modulated by PARP9 activity. Dispensable for B-cell receptor (BCR) assembly through V(D)J recombination and class switch recombination (CSR). In macrophages, positively regulates pro-inflammatory cytokines production in response to IFNG stimulation by suppressing PARP14-mediated STAT1 ADP-ribosylation and thus promoting STAT1 phosphorylation. Also suppresses PARP14-mediated STAT6 ADP-ribosylation. This Homo sapiens (Human) protein is Protein mono-ADP-ribosyltransferase PARP9 (PARP9).